The sequence spans 344 residues: Phenylalanine--tRNA ligase alpha subunit (344 aa).

Mg(2+) is bound at residue Glu-256.

It belongs to the class-II aminoacyl-tRNA synthetase family. Phe-tRNA synthetase alpha subunit type 1 subfamily. As to quaternary structure, tetramer of two alpha and two beta subunits. The cofactor is Mg(2+).

It localises to the cytoplasm. It carries out the reaction tRNA(Phe) + L-phenylalanine + ATP = L-phenylalanyl-tRNA(Phe) + AMP + diphosphate + H(+). The chain is Phenylalanine--tRNA ligase alpha subunit from Bacillus mycoides (strain KBAB4) (Bacillus weihenstephanensis).